The following is a 915-amino-acid chain: Mitogen-activated protein kinase kinae kinase MST11 (915 aa).

3 disordered regions span residues methionine 1–tryptophan 65, lysine 134–valine 171, and glycine 183–aspartate 249. A compositionally biased stretch (low complexity) spans alanine 26–serine 45. The 64-residue stretch at tryptophan 65–lysine 128 folds into the SAM domain. Low complexity-rich tracts occupy residues serine 152–serine 163 and proline 188–serine 203. The region spanning asparagine 263–alanine 353 is the Ras-associating domain. In terms of domain architecture, Protein kinase spans tryptophan 641–leucine 911. Residues isoleucine 647–valine 655 and lysine 670 each bind ATP.

The protein belongs to the protein kinase superfamily. STE Ser/Thr protein kinase family. MAP kinase kinase kinase subfamily. As to quaternary structure, interacts with the adapter protein MST50.

It carries out the reaction L-seryl-[protein] + ATP = O-phospho-L-seryl-[protein] + ADP + H(+). The catalysed reaction is L-threonyl-[protein] + ATP = O-phospho-L-threonyl-[protein] + ADP + H(+). Functionally, mitogen-activated protein kinase kinase kinase; part of the MST11-MST7-PMK1 MAP kinase (MAPK) cascade that is essential for appressorium formation, penetration and invasive growth. The MST11-MST7-PMK1 MAP kinase cascade transduces signals from the cell surface sensors MDB2 and SHO1 that recognize various surface signals such as surface hydrophobicity, cutin monomers, and rice leaf waxes. MST11 acts as the upstream MAPKKK that directly phosphorylates MAPKK MST7. MST11 but not MST7 may also be involved in the OSM1 MAPK pathway in response to osmotic stresses. This Pyricularia oryzae (strain 70-15 / ATCC MYA-4617 / FGSC 8958) (Rice blast fungus) protein is Mitogen-activated protein kinase kinae kinase MST11.